A 1446-amino-acid chain; its full sequence is Sister chromatid cohesion protein PDS5 homolog B (1446 aa).

One copy of the HEAT repeat lies at 383–419; that stretch reads LLVNDHLLNFVRERTLDKRWRVRKEAMMGLAQIYKKY. Lys1136 is subject to N6-acetyllysine. The segment covering 1137-1155 has biased composition (polar residues); that stretch reads PLSSAGKQSQTKSSRMETV. The tract at residues 1137–1446 is disordered; the sequence is PLSSAGKQSQ…RRRSSKRERR (310 aa). Residues Ser1140, Ser1162, Ser1166, Ser1176, Ser1182, and Ser1191 each carry the phosphoserine modification. Residues 1156-1167 show a composition bias toward low complexity; that stretch reads SNASSSSNPSSP. Residues 1172–1184 are compositionally biased toward basic and acidic residues; the sequence is GRLDSSEMDHSEN. Basic and acidic residues-rich tracts occupy residues 1196 to 1212 and 1223 to 1241; these read KKSDKREDPDLSELEKP and PEEKLGMDDLTKLVQEQKP. The span at 1243–1252 shows a compositional bias: basic residues; it reads GSQRGRKRGR. Residues 1247 to 1259 constitute a DNA-binding region (a.T hook 1); sequence GRKRGRTASDSDE. Residue Thr1253 is modified to Phosphothreonine. Residues Ser1255 and Ser1257 each carry the phosphoserine modification. The segment covering 1263 to 1272 has biased composition (basic and acidic residues); the sequence is PEEKRHKEEL. The residue at position 1281 (Ser1281) is a Phosphoserine. The segment at residues 1285-1297 is a DNA-binding region (a.T hook 2); it reads KGKRGRPPKPLGG. 2 stretches are compositionally biased toward basic residues: residues 1308–1317 and 1339–1351; these read TSKKGNKKKL and SKSKQHRTSKRAQ. The segment covering 1353 to 1370 has biased composition (polar residues); it reads RAESPETSAVESTQSTPQ. 2 positions are modified to phosphoserine: Ser1356 and Ser1364. The residue at position 1365 (Thr1365) is a Phosphothreonine. The residue at position 1367 (Ser1367) is a Phosphoserine. The residue at position 1368 (Thr1368) is a Phosphothreonine. A DNA-binding region (a.T hook 3) is located at residues 1370 to 1382; that stretch reads QKGRGRPSKAPSP. Phosphoserine is present on residues Ser1381, Ser1415, and Ser1418. A compositionally biased stretch (acidic residues) spans 1421-1431; that stretch reads TTQEGAEEEDI. Positions 1436–1446 are enriched in basic residues; it reads VRRRSSKRERR.

The protein belongs to the PDS5 family. In terms of assembly, interacts with the cohesin complex. Interacts with RAD21; the interaction is direct. Interacts with WAPL (via FGF motifs) or CDCA5 (via the FGF motif); the interaction is direct, cohesin-dependent and competitive. As to expression, expressed in prostate.

The protein resides in the nucleus. Its function is as follows. Regulator of sister chromatid cohesion in mitosis which may stabilize cohesin complex association with chromatin. May couple sister chromatid cohesion during mitosis to DNA replication. Cohesion ensures that chromosome partitioning is accurate in both meiotic and mitotic cells and plays an important role in DNA repair. Plays a role in androgen-induced proliferative arrest in prostate cells. This is Sister chromatid cohesion protein PDS5 homolog B (Pds5b) from Mus musculus (Mouse).